A 120-amino-acid polypeptide reads, in one-letter code: Ribonuclease P protein component (120 aa).

It belongs to the RnpA family. Consists of a catalytic RNA component (M1 or rnpB) and a protein subunit.

The catalysed reaction is Endonucleolytic cleavage of RNA, removing 5'-extranucleotides from tRNA precursor.. Functionally, RNaseP catalyzes the removal of the 5'-leader sequence from pre-tRNA to produce the mature 5'-terminus. It can also cleave other RNA substrates such as 4.5S RNA. The protein component plays an auxiliary but essential role in vivo by binding to the 5'-leader sequence and broadening the substrate specificity of the ribozyme. The polypeptide is Ribonuclease P protein component (Microcystis aeruginosa (strain NIES-843 / IAM M-2473)).